Here is a 281-residue protein sequence, read N- to C-terminus: Protoheme IX farnesyltransferase (281 aa).

Transmembrane regions (helical) follow at residues 13 to 33 (VIWL…GPLV), 38 to 58 (LIEL…FNMY), 85 to 105 (ALTF…LWLG), 107 to 127 (WVTL…TIML), 132 to 152 (WLNI…GWIM), 161 to 181 (ILLS…LAYY), 206 to 226 (IISI…QLYM), 227 to 247 (AKLI…IVTI), and 261 to 281 (MFKA…ISRI).

It belongs to the UbiA prenyltransferase family. Protoheme IX farnesyltransferase subfamily.

Its subcellular location is the cell membrane. The catalysed reaction is heme b + (2E,6E)-farnesyl diphosphate + H2O = Fe(II)-heme o + diphosphate. It functions in the pathway porphyrin-containing compound metabolism; heme O biosynthesis; heme O from protoheme: step 1/1. Its function is as follows. Converts heme B (protoheme IX) to heme O by substitution of the vinyl group on carbon 2 of heme B porphyrin ring with a hydroxyethyl farnesyl side group. This chain is Protoheme IX farnesyltransferase, found in Caldivirga maquilingensis (strain ATCC 700844 / DSM 13496 / JCM 10307 / IC-167).